The sequence spans 195 residues: Putative inactive carbonic anhydrase 5B-like protein (195 aa).

121-122 (TT) contacts substrate.

This sequence belongs to the alpha-carbonic anhydrase family.

This Homo sapiens (Human) protein is Putative inactive carbonic anhydrase 5B-like protein (CA5BP1).